Here is a 1040-residue protein sequence, read N- to C-terminus: Multidrug resistance protein MdtB (1040 aa).

12 consecutive transmembrane segments (helical) span residues 25–45 (LLMA…PVAA), 347–367 (LMLA…NIPA), 369–389 (IIPG…MVFL), 396–416 (LTLM…IVVI), 440–460 (IGFT…PLLF), 472–492 (FAVT…TLTP), 537–557 (WLTL…WIVI), 863–883 (LGST…VLGV), 888–908 (FIHP…ALLA), 910–930 (IIAG…LIGI), 968–988 (ILMT…STGV), and 998–1018 (IAMV…TPVI).

Belongs to the resistance-nodulation-cell division (RND) (TC 2.A.6) family. MdtB subfamily. In terms of assembly, part of a tripartite efflux system composed of MdtA, MdtB and MdtC. MdtB forms a heteromultimer with MdtC.

The protein resides in the cell inner membrane. This chain is Multidrug resistance protein MdtB, found in Salmonella paratyphi B (strain ATCC BAA-1250 / SPB7).